Consider the following 190-residue polypeptide: MKALQEKILREGSVSGNDILKVDSFLNHQIDVAFLNEIGREFKERFKGEKVDKIFTIEASGIAIASIVSQYFDNAPVVFAKKSESKNLDKDVYETNVYSFTKAREYSVKVSKKYINKGENILIVDDFLANGRAALGLKDLIEQAEANLVGVGIVIEKGFQAGGALLKANDVRLESLAVVESIDNGTVKFR.

Xanthine is bound by residues L20 and N27. 5-phospho-alpha-D-ribose 1-diphosphate is bound at residue 129–133; the sequence is ANGRA. Residue K157 participates in xanthine binding.

This sequence belongs to the purine/pyrimidine phosphoribosyltransferase family. Xpt subfamily. As to quaternary structure, homodimer.

It localises to the cytoplasm. It carries out the reaction XMP + diphosphate = xanthine + 5-phospho-alpha-D-ribose 1-diphosphate. Its pathway is purine metabolism; XMP biosynthesis via salvage pathway; XMP from xanthine: step 1/1. In terms of biological role, converts the preformed base xanthine, a product of nucleic acid breakdown, to xanthosine 5'-monophosphate (XMP), so it can be reused for RNA or DNA synthesis. The polypeptide is Xanthine phosphoribosyltransferase (Clostridioides difficile (strain 630) (Peptoclostridium difficile)).